The following is a 261-amino-acid chain: Probable 6-phosphogluconolactonase 4 (261 aa).

It belongs to the glucosamine/galactosamine-6-phosphate isomerase family. 6-phosphogluconolactonase subfamily.

It is found in the cytoplasm. It localises to the cytosol. The enzyme catalyses 6-phospho-D-glucono-1,5-lactone + H2O = 6-phospho-D-gluconate + H(+). Its pathway is carbohydrate degradation; pentose phosphate pathway; D-ribulose 5-phosphate from D-glucose 6-phosphate (oxidative stage): step 2/3. Catalyzes the hydrolysis of 6-phosphogluconolactone to 6-phosphogluconate. This chain is Probable 6-phosphogluconolactonase 4, found in Arabidopsis thaliana (Mouse-ear cress).